A 561-amino-acid polypeptide reads, in one-letter code: Dihydroxy-acid dehydratase (561 aa).

Residue Cys51 coordinates [2Fe-2S] cluster. Asp83 lines the Mg(2+) pocket. Residue Cys124 participates in [2Fe-2S] cluster binding. Residues Asp125 and Lys126 each coordinate Mg(2+). Lys126 carries the post-translational modification N6-carboxylysine. Cys196 provides a ligand contact to [2Fe-2S] cluster. Mg(2+) is bound at residue Glu447. Catalysis depends on Ser473, which acts as the Proton acceptor.

Belongs to the IlvD/Edd family. Homodimer. [2Fe-2S] cluster is required as a cofactor. Requires Mg(2+) as cofactor.

It catalyses the reaction (2R)-2,3-dihydroxy-3-methylbutanoate = 3-methyl-2-oxobutanoate + H2O. The enzyme catalyses (2R,3R)-2,3-dihydroxy-3-methylpentanoate = (S)-3-methyl-2-oxopentanoate + H2O. Its pathway is amino-acid biosynthesis; L-isoleucine biosynthesis; L-isoleucine from 2-oxobutanoate: step 3/4. It participates in amino-acid biosynthesis; L-valine biosynthesis; L-valine from pyruvate: step 3/4. Its function is as follows. Functions in the biosynthesis of branched-chain amino acids. Catalyzes the dehydration of (2R,3R)-2,3-dihydroxy-3-methylpentanoate (2,3-dihydroxy-3-methylvalerate) into 2-oxo-3-methylpentanoate (2-oxo-3-methylvalerate) and of (2R)-2,3-dihydroxy-3-methylbutanoate (2,3-dihydroxyisovalerate) into 2-oxo-3-methylbutanoate (2-oxoisovalerate), the penultimate precursor to L-isoleucine and L-valine, respectively. This chain is Dihydroxy-acid dehydratase, found in Oceanobacillus iheyensis (strain DSM 14371 / CIP 107618 / JCM 11309 / KCTC 3954 / HTE831).